The following is a 413-amino-acid chain: Gamma-glutamyl phosphate reductase (413 aa).

This sequence belongs to the gamma-glutamyl phosphate reductase family.

The protein localises to the cytoplasm. It catalyses the reaction L-glutamate 5-semialdehyde + phosphate + NADP(+) = L-glutamyl 5-phosphate + NADPH + H(+). The protein operates within amino-acid biosynthesis; L-proline biosynthesis; L-glutamate 5-semialdehyde from L-glutamate: step 2/2. In terms of biological role, catalyzes the NADPH-dependent reduction of L-glutamate 5-phosphate into L-glutamate 5-semialdehyde and phosphate. The product spontaneously undergoes cyclization to form 1-pyrroline-5-carboxylate. This chain is Gamma-glutamyl phosphate reductase, found in Thermus thermophilus (strain ATCC 27634 / DSM 579 / HB8).